Consider the following 313-residue polypeptide: Cytochrome f (313 aa).

A signal peptide spans 1–31; it reads MQNMFSFLSNKKIIALFLIIGTIFMPLSSEA. Heme contacts are provided by Tyr32, Cys52, Cys55, and His56. The helical transmembrane segment at 279 to 298 threads the bilayer; sequence IKWLIAFLILSTLGQVFLVL.

It belongs to the cytochrome f family. In terms of assembly, the 4 large subunits of the cytochrome b6-f complex are cytochrome b6, subunit IV (17 kDa polypeptide, petD), cytochrome f and the Rieske protein, while the 4 small subunits are PetG, PetL, PetM and PetN. The complex functions as a dimer. The cofactor is heme.

The protein resides in the plastid. It localises to the chloroplast thylakoid membrane. Functionally, component of the cytochrome b6-f complex, which mediates electron transfer between photosystem II (PSII) and photosystem I (PSI), cyclic electron flow around PSI, and state transitions. The polypeptide is Cytochrome f (petA) (Mesostigma viride (Green alga)).